The chain runs to 322 residues: MSKTYIGIDIAKNTFDACFITHNTWQNCTFTNNQQGFIELTLWIQAHHYNTSTLHLIIEATGAYWEKLAHWAISHHHKVSIVNPLYIHAYAKSLGIRTKTDKQDAILLARYGAKENPPLWQPKSDNEIKLTALLKQREHHKRQLIKERTRQEALSIYVKSYTDDNIRHWSDSITQLDHQIWQLINCTPELNYRASLLATIPGIGKKTLPHLLVVIGDGSSFQSAKHLASYAGLAPRHHQSGISIHKQSSIGFSGQKELRSALFMPAVIVSFGRYPAFQKFVKRMEQKGKTKKQIIIAIMRKLLTISYAVIRQNRPFDKRIHE.

Its function is as follows. May be the site-specific invertase required for pilin gene inversion. Moraxella can express either a Q or I pilin; the inversion of 2 kb of DNA determines which pilin is expressed. The sequence is that of Pilin gene-inverting protein (piv) from Moraxella lacunata.